Reading from the N-terminus, the 442-residue chain is Putative pyrimidine permease RutG (442 aa).

Residues 1–57 are Cytoplasmic-facing; it reads MAMFGFPHWQLKSTSTESGVVAPDERLPFAQTAVMGVQHAVAMFGATVLMPILMGLD. Residues 58–78 form a helical membrane-spanning segment; it reads PNLSILMSGIGTLLFFFITGG. Arginine 79 is a topological domain (periplasmic). The chain crosses the membrane as a helical span at residues 80-100; the sequence is VPSYLGSSAAFVGVVIAATGF. The Cytoplasmic portion of the chain corresponds to 101–110; that stretch reads NGQGINPNIS. A helical transmembrane segment spans residues 111 to 131; sequence IALGGIIACGLVYTVIGLVVM. The Periplasmic segment spans residues 132-140; sequence KIGTRWIER. Residues 141–161 traverse the membrane as a helical segment; it reads LMPPVVTGAVVMAIGLNLAPI. Residues 162–169 are Cytoplasmic-facing; it reads AVKSVSAS. The chain crosses the membrane as a helical span at residues 170–190; sequence AFDSWMAVMTVLCIGLVAVFT. Residues 191–196 are Periplasmic-facing; that stretch reads RGMIQR. A helical transmembrane segment spans residues 197-217; sequence LLILVGLIVACLLYGVMTNVL. Over 218–240 the chain is Cytoplasmic; sequence GLGKAVDFTLVSHAAWFGLPHFS. Residues 241–261 form a helical membrane-spanning segment; the sequence is TPAFNGQAMMLIAPVAVILVA. Topologically, residues 262–284 are periplasmic; sequence ENLGHLKAVAGMTGRNMDPYMGR. A helical membrane pass occupies residues 285–305; it reads AFVGDGLATMLSGSVGGSGVT. The Cytoplasmic portion of the chain corresponds to 306 to 318; that stretch reads TYAENIGVMAVTK. Residues 319-339 traverse the membrane as a helical segment; that stretch reads VYSTLVFVAAAVIAMLLGFSP. The Periplasmic segment spans residues 340–347; the sequence is KFGALIHT. Residues 348–368 traverse the membrane as a helical segment; the sequence is IPAAVIGGASIVVFGLIAVAG. Over 369-385 the chain is Cytoplasmic; that stretch reads ARIWVQNRVDLSQNGNL. 2 consecutive transmembrane segments (helical) span residues 386–406 and 407–427; these read IMVA…LGGF and TLGG…LLSR. Over 428–442 the chain is Cytoplasmic; that stretch reads KLVDVPPPEVVHQEP.

This sequence belongs to the nucleobase:cation symporter-2 (NCS2) (TC 2.A.40) family.

Its subcellular location is the cell inner membrane. Functionally, may function as a proton-driven pyrimidine uptake system. This Escherichia coli (strain K12) protein is Putative pyrimidine permease RutG (rutG).